The following is a 70-amino-acid chain: Biotin carboxyl carrier protein of acetyl-CoA carboxylase (70 aa).

Residues 1-69 (GTVVAPMVGL…QDGIKLFALK (69 aa)) form the Biotinyl-binding domain. Position 35 is an N6-biotinyllysine (Lys35).

Its subcellular location is the plastid. The protein resides in the chloroplast. The protein operates within lipid metabolism; fatty acid biosynthesis. Its function is as follows. This protein is a component of the acetyl coenzyme A carboxylase complex; first, biotin carboxylase catalyzes the carboxylation of the carrier protein and then the transcarboxylase transfers the carboxyl group to form malonyl-CoA. This is Biotin carboxyl carrier protein of acetyl-CoA carboxylase from Solanum lycopersicum (Tomato).